A 488-amino-acid chain; its full sequence is Germacrene A hydroxylase (488 aa).

The Cytoplasmic portion of the chain corresponds to Met-1–Thr-6. A helical; Signal-anchor for type II membrane protein membrane pass occupies residues Thr-7–Thr-23. The Lumenal segment spans residues Arg-24–Phe-488. N-linked (GlcNAc...) asparagine glycans are attached at residues Asn-169, Asn-260, Asn-379, and Asn-412. Cys-432 lines the heme pocket.

The protein belongs to the cytochrome P450 family. Heme is required as a cofactor. As to expression, expressed in leaf primordia.

Its subcellular location is the endoplasmic reticulum membrane. The enzyme catalyses (+)-(R)-germacrene A + 3 reduced [NADPH--hemoprotein reductase] + 3 O2 = germacra-1(10),4,11(13)-trien-12-oate + 3 oxidized [NADPH--hemoprotein reductase] + 4 H2O + 4 H(+). The protein operates within secondary metabolite biosynthesis; terpenoid biosynthesis. Functionally, involved in the biosynthesis of germacrene-derived sesquiterpene lactones. Catalyzes three consecutive oxidations of germacrene A to produce germacrene A acid. Could also catalyze the three-step oxidation of non-natural substrate amorphadiene to artemisinic acid. This Helianthus annuus (Common sunflower) protein is Germacrene A hydroxylase.